A 218-amino-acid polypeptide reads, in one-letter code: Adenylate kinase (218 aa).

12–17 (GAGKGT) lines the ATP pocket. An NMP region spans residues 32-61 (STGDIFRKNISENTPLGIEAKSYMDNGQLV). AMP contacts are provided by residues T33, R38, 59–61 (QLV), 87–90 (GFPR), and Q94. The LID stretch occupies residues 128–165 (GRRVCPSCGASYHIKFNPPTNDGKCDLCGSDVIQRKDD). Position 129 (R129) interacts with ATP. The Zn(2+) site is built by C132 and C135. 138–139 (SY) provides a ligand contact to ATP. 2 residues coordinate Zn(2+): C152 and C155. AMP is bound by residues R162 and R173. Q201 lines the ATP pocket.

The protein belongs to the adenylate kinase family. As to quaternary structure, monomer.

It is found in the cytoplasm. It carries out the reaction AMP + ATP = 2 ADP. It functions in the pathway purine metabolism; AMP biosynthesis via salvage pathway; AMP from ADP: step 1/1. Functionally, catalyzes the reversible transfer of the terminal phosphate group between ATP and AMP. Plays an important role in cellular energy homeostasis and in adenine nucleotide metabolism. The protein is Adenylate kinase of Clostridium perfringens (strain 13 / Type A).